A 444-amino-acid chain; its full sequence is Xylose isomerase (444 aa).

Active-site residues include histidine 101 and aspartate 104. Mg(2+) is bound by residues glutamate 232, glutamate 268, histidine 271, aspartate 296, aspartate 307, aspartate 309, and aspartate 339.

The protein belongs to the xylose isomerase family. Homotetramer. Requires Mg(2+) as cofactor.

Its subcellular location is the cytoplasm. It catalyses the reaction alpha-D-xylose = alpha-D-xylulofuranose. The chain is Xylose isomerase from Thermotoga maritima (strain ATCC 43589 / DSM 3109 / JCM 10099 / NBRC 100826 / MSB8).